Here is a 429-residue protein sequence, read N- to C-terminus: D-amino acid dehydrogenase (429 aa).

3 to 17 (VLILGSGVIGTTTAW) is an FAD binding site.

The protein belongs to the DadA oxidoreductase family. It depends on FAD as a cofactor.

The enzyme catalyses a D-alpha-amino acid + A + H2O = a 2-oxocarboxylate + AH2 + NH4(+). Its pathway is amino-acid degradation; D-alanine degradation; NH(3) and pyruvate from D-alanine: step 1/1. Its function is as follows. Oxidative deamination of D-amino acids. This is D-amino acid dehydrogenase from Xanthomonas campestris pv. campestris (strain 8004).